A 634-amino-acid chain; its full sequence is MKISIVIPVYNSEDLISECLDSLVNQTMPKEDYEIICVDDKSTDSSLDILNQYKKKYENVVVIERTVNSGGPGAPRNDAIKIAKGEYILFVDSDDYIGSEALLRWYNFSKENQSDITLGKLKGINGRGVPKSMFKETNPDVDLVDSKIVFTLGPQKLFKASLLKENKITFPTHIKAAEDQVFTMNAYLKAKKISVSADYDYYYLVKRDGEHMSVAYVPPENFYGAMEDIISAIKASDLEEARKIKLMAVFLNRHFDFSRTKNVTIKMKTDEERAEWFRYLSSFIHAVPEEADQFVLPHIKLRLLFIRNNDLRGLTQYEREEQDIKKFCTVNNGELIARYPSLERYSISEELLKVNYKNKLEHYLQNIEFSDHSLSIQGTITHKLLDDETNKNQSLTGVFVHRDTKAEKYIAPASYDNSTFTFECKFDELASAEEDLGVWDFFIESSIDGYKLRARIGNKRAAYKYSTKTMYLGHNALFVYSARPYFTMNYDNLSIDIKKHAYTEAELSYETESKDLSFIFKDKQIYLPNHSKIIVNTGQSEISLPVKRIDLEPNCTKLTVNVQSLLEQLAHVKKERLIEFAINTSQNKISAKVDNQAIILDTKSVERKSMLFFNKMVEVQYKLLTSKSKFYFQY.

Belongs to the glycosyltransferase 2 family.

It catalyses the reaction 4-O-[(D-ribitylphospho)(n)-D-ribitylphospho-(2R)-glycerylphospho]-N-acetyl-beta-D-mannosaminyl-(1-&gt;4)-N-acetyl-alpha-D-glucosaminyl di-trans,octa-cis-undecaprenyl diphosphate + n UDP-alpha-D-glucose = 4-O-[(2-beta-D-glucosyl-D-ribitylphospho)(n)-D-ribitylphospho-(2R)-glycerylphospho]-N-acetyl-beta-D-mannosaminyl-(1-&gt;4)-N-acetyl-alpha-D-glucosaminyl di-trans,octa-cis-undecaprenyl diphosphate + n UDP + n H(+). It functions in the pathway cell wall biogenesis; poly(ribitol phosphate) teichoic acid biosynthesis. In terms of biological role, attaches glucose residues to poly(RboP)-wall teichoic acids (WTAs). The chain is Poly(ribitol-phosphate) beta-glucosyltransferase from Bacillus spizizenii (strain ATCC 23059 / NRRL B-14472 / W23) (Bacillus subtilis subsp. spizizenii).